A 244-amino-acid chain; its full sequence is tRNA1(Val) (adenine(37)-N6)-methyltransferase (244 aa).

Belongs to the methyltransferase superfamily. tRNA (adenine-N(6)-)-methyltransferase family.

Its subcellular location is the cytoplasm. The catalysed reaction is adenosine(37) in tRNA1(Val) + S-adenosyl-L-methionine = N(6)-methyladenosine(37) in tRNA1(Val) + S-adenosyl-L-homocysteine + H(+). Specifically methylates the adenine in position 37 of tRNA(1)(Val) (anticodon cmo5UAC). The chain is tRNA1(Val) (adenine(37)-N6)-methyltransferase from Shewanella sediminis (strain HAW-EB3).